We begin with the raw amino-acid sequence, 84 residues long: Cytochrome b559 subunit alpha (84 aa).

The Cytoplasmic segment spans residues 2 to 20 (AGTTGERPFSDIITSVRYW). Residues 21–35 (VIHSITIPALFIAGW) form a helical membrane-spanning segment. Histidine 23 lines the heme pocket. Over 36–84 (LFVSTGLAYDVFGTPRPDSYYAQEQRSIPLVTDRFEAKQQVETFLEQLK) the chain is Lumenal.

It belongs to the PsbE/PsbF family. As to quaternary structure, heterodimer of an alpha subunit and a beta subunit. PSII is composed of 1 copy each of membrane proteins PsbA, PsbB, PsbC, PsbD, PsbE, PsbF, PsbH, PsbI, PsbJ, PsbK, PsbL, PsbM, PsbT, PsbX, PsbY, PsbZ, Psb30/Ycf12, peripheral proteins PsbO, CyanoQ (PsbQ), PsbU, PsbV and a large number of cofactors. It forms dimeric complexes. Heme b serves as cofactor.

It is found in the cellular thylakoid membrane. Its function is as follows. This b-type cytochrome is tightly associated with the reaction center of photosystem II (PSII). PSII is a light-driven water:plastoquinone oxidoreductase that uses light energy to abstract electrons from H(2)O, generating O(2) and a proton gradient subsequently used for ATP formation. It consists of a core antenna complex that captures photons, and an electron transfer chain that converts photonic excitation into a charge separation. This chain is Cytochrome b559 subunit alpha, found in Thermostichus vulcanus (Synechococcus vulcanus).